We begin with the raw amino-acid sequence, 82 residues long: Small ribosomal subunit protein bS18 (82 aa).

Residues Met1 to Cys20 are disordered.

Belongs to the bacterial ribosomal protein bS18 family. In terms of assembly, part of the 30S ribosomal subunit. Forms a tight heterodimer with protein bS6.

In terms of biological role, binds as a heterodimer with protein bS6 to the central domain of the 16S rRNA, where it helps stabilize the platform of the 30S subunit. This chain is Small ribosomal subunit protein bS18, found in Bartonella quintana (strain Toulouse) (Rochalimaea quintana).